The chain runs to 376 residues: Carbohydrate sulfotransferase 14 (376 aa).

The tract at residues Met1 to Ala30 is disordered. The Cytoplasmic segment spans residues Met1–Leu39. Positions Leu18–Ala30 are enriched in low complexity. A helical; Signal-anchor for type II membrane protein transmembrane segment spans residues Leu40 to Ile60. Residues Glu61–Gln376 are Lumenal-facing. The disordered stretch occupies residues Pro76–Asp96. Residue Asn110 is glycosylated (N-linked (GlcNAc...) asparagine). 3'-phosphoadenylyl sulfate contacts are provided by residues Pro155 to Asn161 and Arg213 to Ser221. N-linked (GlcNAc...) asparagine glycosylation occurs at Asn368.

This sequence belongs to the sulfotransferase 2 family.

The protein localises to the golgi apparatus membrane. The catalysed reaction is dermatan + n 3'-phosphoadenylyl sulfate = dermatan 4'-sulfate + n adenosine 3',5'-bisphosphate + n H(+). Its function is as follows. Catalyzes the transfer of sulfate to position 4 of the N-acetylgalactosamine (GalNAc) residue of dermatan sulfate. Plays a pivotal role in the formation of 4-0-sulfated IdoA blocks in dermatan sulfate. Transfers sulfate to the C-4 hydroxyl of beta1,4-linked GalNAc that is substituted with an alpha-linked iduronic acid (IdoUA) at the C-3 hydroxyl. Transfers sulfate more efficiently to GalNAc residues in -IdoUA-GalNAc-IdoUA- than in -GlcUA-GalNAc-GlcUA-sequences. Has preference for partially desulfated dermatan sulfate. Addition of sulfate to GalNAc may occur immediately after epimerization of GlcUA to IdoUA. Appears to have an important role in the formation of the cerebellar neural network during postnatal brain development. The chain is Carbohydrate sulfotransferase 14 (Chst14) from Mus musculus (Mouse).